Here is a 152-residue protein sequence, read N- to C-terminus: Glycine cleavage system H protein, mitochondrial (152 aa).

A mitochondrion-targeting transit peptide spans 1–31 (MALRMWASSTANALRLSSATRPHYSPLSRCF). Positions 53–135 (VATVGITDHA…YEDGWMIKVK (83 aa)) constitute a Lipoyl-binding domain. An N6-lipoyllysine modification is found at K94.

This sequence belongs to the GcvH family. The glycine cleavage system is composed of four proteins: P, T, L and H. (R)-lipoate is required as a cofactor.

It localises to the mitochondrion. Functionally, the glycine cleavage system catalyzes the degradation of glycine. The H protein shuttles the methylamine group of glycine from the P protein to the T protein. The protein is Glycine cleavage system H protein, mitochondrial (GDCSH) of Flaveria pubescens (Yellowtops).